Consider the following 142-residue polypeptide: Large ribosomal subunit protein uL11 (142 aa).

The protein belongs to the universal ribosomal protein uL11 family. As to quaternary structure, part of the ribosomal stalk of the 50S ribosomal subunit. Interacts with L10 and the large rRNA to form the base of the stalk. L10 forms an elongated spine to which L12 dimers bind in a sequential fashion forming a multimeric L10(L12)X complex. In terms of processing, one or more lysine residues are methylated.

In terms of biological role, forms part of the ribosomal stalk which helps the ribosome interact with GTP-bound translation factors. The sequence is that of Large ribosomal subunit protein uL11 from Colwellia psychrerythraea (strain 34H / ATCC BAA-681) (Vibrio psychroerythus).